A 283-amino-acid polypeptide reads, in one-letter code: MGAAGLLEIKKRIKSVENTRKITNAMGLVATSKLRKTKNELAVNNKFIDITEPVVRNLATTAGEEGSNVYFEGNDSQNKLYVVITSDSGLCGGFNSSVVSQLVSQIKDKKDTAKIVLVGSKGLGYLKRIKIEPVGEYVGIEDVPTVSEAKEIFDKALEMYLNGDVSEVNIVYSDFISSVKQETKSVKILPISKSEGTTGSFLIEPDLDIVLEDALNIYLKGKIRSILLSSKCSEQSTRMTAMDGATKNADDLLDKLKLKFNRIRQGAITQEISEIVGGAAAQN.

Belongs to the ATPase gamma chain family. As to quaternary structure, F-type ATPases have 2 components, CF(1) - the catalytic core - and CF(0) - the membrane proton channel. CF(1) has five subunits: alpha(3), beta(3), gamma(1), delta(1), epsilon(1). CF(0) has three main subunits: a, b and c.

The protein localises to the cell membrane. Functionally, produces ATP from ADP in the presence of a proton gradient across the membrane. The gamma chain is believed to be important in regulating ATPase activity and the flow of protons through the CF(0) complex. The chain is ATP synthase gamma chain from Clostridium beijerinckii (strain ATCC 51743 / NCIMB 8052) (Clostridium acetobutylicum).